Reading from the N-terminus, the 514-residue chain is Nuclear hormone receptor family member nhr-85 (514 aa).

Positions 28–48 (TSFSSPPATSSSSLLSPSPSS) are disordered. The nuclear receptor DNA-binding region spans 110–186 (TILCQVCSDK…VGMSRDAVRF (77 aa)). 2 consecutive NR C4-type zinc fingers follow at residues 113-133 (CQVC…CEGC) and 150-174 (CTRA…LKKC). The NR LBD domain maps to 216 to 514 (QYENLTEVMH…VSPVPTTLSE (299 aa)). The interval 465–514 (ERPRRISSSGAQEPLNLSLPHVRHQVKRDVDSDEQLEEMKVSPVPTTLSE) is disordered.

Belongs to the nuclear hormone receptor family.

The protein localises to the nucleus. Functionally, orphan nuclear receptor. The protein is Nuclear hormone receptor family member nhr-85 (nhr-85) of Caenorhabditis elegans.